Here is a 1002-residue protein sequence, read N- to C-terminus: MWRYISKHAYSRKFRNSHDSALLGFSQYSSSFGKTRPLQCLCEESTTHPNLGLSQNSIFSRISRKVRHLEGICEESSKNPHLGLSQNSTFSSVKGDFRICGKRGSGSLGRLRSYGSAAEAIVSTSEEDIDEIQELIEEMDKENEALKANLQPKQPKTIGGMGVGKYNFLRRRQIKVETEAWEEAAKEYQELLMDMCEQKLAPNLPYMKSLFLGWFEPLRDAIAAEQKLCDEGKNRGAYAPFFDQLPAEMMAVITMHKLMGLLMTGGGTGSARVVQAASYIGEAIEHEARIHRFLEKTKKSNALSGDLEETPGDMMKERERLRKKVKILMKKQKLRQVRKIVKQQDDEKPWGQDNLVKVGCRLIQILMETAYIQPPNDQLDDGPPDIRPAFVHTLKTVETMKGSRRYGVIQCDPLVRKGLDKTARHMVIPYMPMLVPPQSWLGYDKGGYLFLPSYIMRTHGAKQQREAVKRVPKKQLEPVFQALDTLGNTKWRVNRKVLGIVDRIWASGGRLADLVDREDVPLPEAPDTEDEAEIRKWKWKVKGVKKENCERHSQRCDIELKLAVARKMKDEDGFYYPHNLDFRGRAYPMHPYLNHLGSDLCRGILEFAEGRPLGTSGLRWLKIHLANVYGGGVDKLSYEGRVAFSENHLEDIFDSAERPLEGKRWWLGAEDPFQCLATCINIAEALRSPSPETAISYMPIHQDGSCNGLQHYAALGRDKLGAAAVNLVAGDKPADVYSGIAARVLDIMKRDAAKDPANDPNVMRARLLINQVDRKLVKQTVMTSVYGVTYIGARDQIKKRLKERGVIEDDNELFAAACYAAKTTLTALGEMFEAARSIMSWLGDCAKIIAMENHPVRWTTPLGLPVVQPYRKLGRHLIKTSLQILTLQRETDKVMVKRQRTAFPPNFVHSLDGSHMMMTAIACKESGLSFAGVHDSYWTHACDVDQMNKILREKFVELYDAPILENLLESFQQSFPDLQFPPLPERGDFDLREVLESPYFFN.

Residues 1-21 (MWRYISKHAYSRKFRNSHDSA) constitute a mitochondrion transit peptide. Active-site residues include aspartate 703, lysine 778, and aspartate 935.

Belongs to the phage and mitochondrial RNA polymerase family.

It is found in the mitochondrion. It catalyses the reaction RNA(n) + a ribonucleoside 5'-triphosphate = RNA(n+1) + diphosphate. In terms of biological role, DNA-dependent RNA polymerase catalyzes the transcription of DNA into RNA using the four ribonucleoside triphosphates as substrates. The chain is DNA-directed RNA polymerase 1B, mitochondrial (RPOT1-TOM) from Nicotiana tabacum (Common tobacco).